The sequence spans 165 residues: Protein NKG7 (165 aa).

The next 4 membrane-spanning stretches (helical) occupy residues Leu-9–Ile-29, Phe-61–Ile-81, Leu-92–Tyr-112, and Phe-133–Ala-153.

Belongs to the PMP-22/EMP/MP20 family. As to expression, predominantly expressed by leukocytes with cytotoxic activity such as CD8(+) T-cells and natural killer cells.

The protein resides in the cell membrane. It is found in the cytolytic granule membrane. Functionally, regulates cytotoxic granule exocytosis in effector lymphocytes, thus acting as a critical mediator of inflammation in a broad range of infectious and non-infectious diseases. Essential for cytotoxic degranulation of natural killer (NK) cells and CD8(+) T-cells and for the activation of CD4(+) T-cells following infection. Plays a critical role in CD8(+) T-cell and NK cell-mediated cytolysis of target cells and contributes to the cytolytic activity via the perforin/granzyme pathway by enhancing exocytosis of LAMP1-carrying lytic granules. Contributes to NK cell-mediated control of cancer metastasis. The polypeptide is Protein NKG7 (Nkg7) (Mus musculus (Mouse)).